A 156-amino-acid polypeptide reads, in one-letter code: Riboflavin synthase (156 aa).

This sequence belongs to the DMRL synthase family.

The enzyme catalyses 2 6,7-dimethyl-8-(1-D-ribityl)lumazine + H(+) = 5-amino-6-(D-ribitylamino)uracil + riboflavin. Its pathway is cofactor biosynthesis; riboflavin biosynthesis; riboflavin from 2-hydroxy-3-oxobutyl phosphate and 5-amino-6-(D-ribitylamino)uracil: step 2/2. The polypeptide is Riboflavin synthase (ribC) (Methanocaldococcus jannaschii (strain ATCC 43067 / DSM 2661 / JAL-1 / JCM 10045 / NBRC 100440) (Methanococcus jannaschii)).